The following is a 20-amino-acid chain: Equinatoxin-1 (20 aa).

The interval 3–12 is plays an important role in the hemolytic activity; the sequence is AVAGAVIEGA. Residues 11-20 form an N-terminal region region; sequence GASLTFNVLQ.

It belongs to the actinoporin family. Sea anemone subfamily. Octamer or nonamer in membranes. Monomer in the soluble state.

It localises to the secreted. Its subcellular location is the nematocyst. The protein localises to the target cell membrane. Pore-forming protein that forms cations-selective hydrophilic pores of around 1 nm and causes cardiac stimulation and cytolysis. Pore formation is a multi-step process that involves specific recognition of membrane sphingomyelin (but neither cholesterol nor phosphatidylcholine) using aromatic rich region and adjacent phosphocholine (POC) binding site, firm binding to the membrane (mainly driven by hydrophobic interactions) accompanied by the transfer of the N-terminal region to the lipid-water interface and finally pore formation after oligomerization of monomers. Cytolytic effects include red blood cells hemolysis, platelet aggregation and lysis, cytotoxic and cytostatic effects on fibroblasts. Lethality in mammals has been ascribed to severe vasospasm of coronary vessels, cardiac arrhythmia, and inotropic effects. This chain is Equinatoxin-1, found in Actinia equina (Beadlet anemone).